The following is a 263-amino-acid chain: Mediator of RNA polymerase II transcription subunit 6 (263 aa).

The interval 159-205 (NSIHGSSSKPSQSSAVSKPSSTNTGTNATTTPITLTTPSGATVPSTV) is disordered. Over residues 164-200 (SSSKPSQSSAVSKPSSTNTGTNATTTPITLTTPSGAT) the composition is skewed to low complexity.

Belongs to the Mediator complex subunit 6 family. Component of the Mediator complex.

Its subcellular location is the nucleus. Functionally, component of the Mediator complex, a coactivator involved in the regulated transcription of nearly all RNA polymerase II-dependent genes. Mediator functions as a bridge to convey information from gene-specific regulatory proteins to the basal RNA polymerase II transcription machinery. Mediator is recruited to promoters by direct interactions with regulatory proteins and serves as a scaffold for the assembly of a functional preinitiation complex with RNA polymerase II and the general transcription factors. The protein is Mediator of RNA polymerase II transcription subunit 6 (MED6) of Candida albicans (strain SC5314 / ATCC MYA-2876) (Yeast).